Reading from the N-terminus, the 419-residue chain is UDP-N-acetylglucosamine 1-carboxyvinyltransferase (419 aa).

Lys-22 to Asn-23 contacts phosphoenolpyruvate. Arg-95 contributes to the UDP-N-acetyl-alpha-D-glucosamine binding site. The active-site Proton donor is Cys-119. 2-(S-cysteinyl)pyruvic acid O-phosphothioketal is present on Cys-119. UDP-N-acetyl-alpha-D-glucosamine-binding residues include Asp-308 and Ile-330.

This sequence belongs to the EPSP synthase family. MurA subfamily.

It is found in the cytoplasm. The enzyme catalyses phosphoenolpyruvate + UDP-N-acetyl-alpha-D-glucosamine = UDP-N-acetyl-3-O-(1-carboxyvinyl)-alpha-D-glucosamine + phosphate. Its pathway is cell wall biogenesis; peptidoglycan biosynthesis. Functionally, cell wall formation. Adds enolpyruvyl to UDP-N-acetylglucosamine. In Rickettsia bellii (strain OSU 85-389), this protein is UDP-N-acetylglucosamine 1-carboxyvinyltransferase.